The chain runs to 88 residues: MAEVEKTVRTLTGRVVSDKMDKTITVLIERRVKHPIYGKYVKRSTKLHAHDESNQCKIGDKVSIRETRPQSKTKSWALVEVVERAVEV.

It belongs to the universal ribosomal protein uS17 family. In terms of assembly, part of the 30S ribosomal subunit.

In terms of biological role, one of the primary rRNA binding proteins, it binds specifically to the 5'-end of 16S ribosomal RNA. This is Small ribosomal subunit protein uS17 from Ectopseudomonas mendocina (strain ymp) (Pseudomonas mendocina).